The primary structure comprises 89 residues: Large ribosomal subunit protein bL27 (89 aa).

The disordered stretch occupies residues 1–22 (MAHKKAGGSSRNGRDSESKRLG).

The protein belongs to the bacterial ribosomal protein bL27 family.

This Bartonella henselae (strain ATCC 49882 / DSM 28221 / CCUG 30454 / Houston 1) (Rochalimaea henselae) protein is Large ribosomal subunit protein bL27.